A 737-amino-acid chain; its full sequence is tRNA-dihydrouridine(47) synthase [NAD(P)(+)] (737 aa).

Composition is skewed to basic and acidic residues over residues 1-11 (MESQETAKRPI) and 24-33 (PATKRVKLDD). The interval 1 to 127 (MESQETAKRP…GKKKRPKGQN (127 aa)) is disordered. Low complexity predominate over residues 35–44 (PVPQIQEEPS). Over residues 57-82 (EDEKPTEQRQDDRDKRRGIAPIKKEY) the composition is skewed to basic and acidic residues. C3H1-type zinc fingers lie at residues 142 to 166 (CNSV…NALH) and 187 to 208 (CPVW…VESH). FMN-binding positions include 332 to 334 (PLT) and glutamine 407. The active-site Proton donor is cysteine 439. FMN contacts are provided by residues lysine 479, histidine 520, 577–579 (NGD), and 601–602 (GR).

The protein belongs to the Dus family. Dus3 subfamily. It depends on FMN as a cofactor.

The protein localises to the cytoplasm. It is found in the nucleus. It catalyses the reaction 5,6-dihydrouridine(47) in tRNA + NAD(+) = uridine(47) in tRNA + NADH + H(+). The catalysed reaction is 5,6-dihydrouridine(47) in tRNA + NADP(+) = uridine(47) in tRNA + NADPH + H(+). It carries out the reaction a 5,6-dihydrouridine in mRNA + NAD(+) = a uridine in mRNA + NADH + H(+). The enzyme catalyses a 5,6-dihydrouridine in mRNA + NADP(+) = a uridine in mRNA + NADPH + H(+). In terms of biological role, catalyzes the synthesis of dihydrouridine, a modified base found in the D-loop of most tRNAs. Specifically modifies U47 in cytoplasmic tRNAs. Catalyzes the synthesis of dihydrouridine in some mRNAs, thereby affecting their translation. The chain is tRNA-dihydrouridine(47) synthase [NAD(P)(+)] (dus-3) from Neurospora crassa (strain ATCC 24698 / 74-OR23-1A / CBS 708.71 / DSM 1257 / FGSC 987).